Consider the following 81-residue polypeptide: Cytotoxin 1c (81 aa).

An N-terminal signal peptide occupies residues Met1 to Thr21. 4 disulfides stabilise this stretch: Cys24-Cys42, Cys35-Cys59, Cys63-Cys74, and Cys75-Cys80.

It belongs to the three-finger toxin family. Short-chain subfamily. Type IA cytotoxin sub-subfamily. Monomer in solution; Homodimer and oligomer in the presence of negatively charged lipids forming a pore with a size ranging between 20 and 30 Angstroms. In terms of tissue distribution, expressed by the venom gland.

It localises to the secreted. The protein localises to the target cell membrane. In terms of biological role, shows cytolytic activity on many different cells by forming pore in lipid membranes. In vivo, increases heart rate or kills the animal by cardiac arrest. In addition, it binds to heparin with high affinity, interacts with Kv channel-interacting protein 1 (KCNIP1) in a calcium-independent manner, and binds to integrin alpha-V/beta-3 (ITGAV/ITGB3) with moderate affinity. This Naja atra (Chinese cobra) protein is Cytotoxin 1c.